The primary structure comprises 425 residues: Adenylosuccinate synthetase (425 aa).

GTP is bound by residues glycine 12–lysine 18 and glycine 40–threonine 42. Aspartate 13 serves as the catalytic Proton acceptor. 2 residues coordinate Mg(2+): aspartate 13 and glycine 40. IMP-binding positions include aspartate 13–lysine 16, asparagine 38–histidine 41, threonine 130, arginine 144, glutamine 224, threonine 239, and arginine 301. Residue histidine 41 is the Proton donor of the active site. Substrate is bound at residue threonine 297 to arginine 303. GTP contacts are provided by residues arginine 303, lysine 329–aspartate 331, and serine 411–serine 413.

This sequence belongs to the adenylosuccinate synthetase family. In terms of assembly, homodimer. Mg(2+) is required as a cofactor.

Its subcellular location is the cytoplasm. It catalyses the reaction IMP + L-aspartate + GTP = N(6)-(1,2-dicarboxyethyl)-AMP + GDP + phosphate + 2 H(+). The protein operates within purine metabolism; AMP biosynthesis via de novo pathway; AMP from IMP: step 1/2. Its function is as follows. Plays an important role in the de novo pathway of purine nucleotide biosynthesis. Catalyzes the first committed step in the biosynthesis of AMP from IMP. In Wolbachia sp. subsp. Drosophila simulans (strain wRi), this protein is Adenylosuccinate synthetase.